We begin with the raw amino-acid sequence, 256 residues long: Phosphatidylglycerol--prolipoprotein diacylglyceryl transferase 2 (256 aa).

3 helical membrane-spanning segments follow: residues Leu-11–Phe-31, Phe-46–Ile-66, and Phe-83–Cys-103. Arg-130 is a binding site for a 1,2-diacyl-sn-glycero-3-phospho-(1'-sn-glycerol). 3 helical membrane-spanning segments follow: residues Ala-142–Val-162, Leu-164–Trp-184, and Val-221–Leu-241.

The protein belongs to the Lgt family.

The protein localises to the cell membrane. The catalysed reaction is L-cysteinyl-[prolipoprotein] + a 1,2-diacyl-sn-glycero-3-phospho-(1'-sn-glycerol) = an S-1,2-diacyl-sn-glyceryl-L-cysteinyl-[prolipoprotein] + sn-glycerol 1-phosphate + H(+). The protein operates within protein modification; lipoprotein biosynthesis (diacylglyceryl transfer). Its function is as follows. Catalyzes the transfer of the diacylglyceryl group from phosphatidylglycerol to the sulfhydryl group of the N-terminal cysteine of a prolipoprotein, the first step in the formation of mature lipoproteins. This is Phosphatidylglycerol--prolipoprotein diacylglyceryl transferase 2 from Clostridium perfringens (strain 13 / Type A).